We begin with the raw amino-acid sequence, 393 residues long: MAEIQSNGRAYESLLEKVLSMNILSSDYFKELYGLKTYHEVIDEIYNQVNHVEPWMGGNCRGPSTAYCLLYKFFTMKLTVKQMHGLLKHTDSPYIRAVGFLYLRYVADAKTLWTWYEPYIKDDEEFSPGSNGRMTTMGVYVRDLLLGLYYFDTLFPRIPVPVMRQIVSNLEKMNLPTKPSGSTGDMTRGSEDTARRPPSVKASLSVSFGQRAPHRASTRGSSPVRRPPPTGYDRNGGDEVQQRSPRRSQSRDYYSDRDSDRQREREREKDRERERGRDRYRERERDYGNDRRSRRDYDSRSRRNDYEDDRSRHDRRSRSRSRSRSRSVQIEREPTPKRDSSNKEKSAVTVNSNLAKLKDLYGDASSQKRDEGFGTRKDSSSEEVIKLGGSSWR.

The tract at residues 173 to 393 (MNLPTKPSGS…VIKLGGSSWR (221 aa)) is disordered. Over residues 249 to 312 (QSRDYYSDRD…RNDYEDDRSR (64 aa)) the composition is skewed to basic and acidic residues. The Nuclear localization signal motif lies at 301 to 308 (SRRNDYED). A compositionally biased stretch (basic residues) spans 313–325 (HDRRSRSRSRSRS). Composition is skewed to basic and acidic residues over residues 329–346 (QIER…KEKS) and 356–385 (KLKD…EEVI).

This sequence belongs to the PRP38 family. Phosphorylated. Mostly expressed in siliques and leaves, also present in seedlings, flowers and stems, and, at low levels, in roots.

Its subcellular location is the nucleus. May be required for pre-mRNA splicing. Confers salt tolerance to LiCl and NaCl. This Arabidopsis thaliana (Mouse-ear cress) protein is Pre-mRNA splicing factor SR-like 1.